Reading from the N-terminus, the 359-residue chain is Heat-inducible transcription repressor HrcA (359 aa).

It belongs to the HrcA family.

Negative regulator of class I heat shock genes (grpE-dnaK-dnaJ and groELS operons). Prevents heat-shock induction of these operons. This Sinorhizobium medicae (strain WSM419) (Ensifer medicae) protein is Heat-inducible transcription repressor HrcA.